The following is a 362-amino-acid chain: Outer mitochondrial transmembrane helix translocase (362 aa).

The Mitochondrial intermembrane segment spans residues 1 to 19 (MVLKEIPTENITRPLGRNE). The chain crosses the membrane as a helical span at residues 20–42 (VIGLLFRLTIFGAVTYFTIKWMV). The Cytoplasmic portion of the chain corresponds to 43 to 362 (DAIDPTRKQK…HEAFMQVPLD (320 aa)). Position 137–144 (137–144 (GPPGCGKT)) interacts with ATP.

This sequence belongs to the AAA ATPase family. MSP1 subfamily.

The protein resides in the mitochondrion outer membrane. Its subcellular location is the peroxisome membrane. It localises to the postsynaptic cell membrane. The enzyme catalyses [protein]-with a C-terminal TM segment(out) + ATP + H2O = [protein]-with a C-terminal TM segment(in) + ADP + phosphate + H(+). Outer mitochondrial translocase required to remove mislocalized tail-anchored transmembrane proteins on mitochondria. Specifically recognizes and binds tail-anchored transmembrane proteins: acts as a dislocase that mediates the ATP-dependent extraction of mistargeted tail-anchored transmembrane proteins from the mitochondrion outer membrane. Also plays a critical role in regulating the surface expression of AMPA receptors (AMPAR), thereby regulating synaptic plasticity and learning and memory. The polypeptide is Outer mitochondrial transmembrane helix translocase (Danio rerio (Zebrafish)).